The chain runs to 428 residues: Dihydroorotase (428 aa).

Positions 59 and 61 each coordinate Zn(2+). Residues 61–63 and N93 each bind substrate; that span reads HLR. The Zn(2+) site is built by D151, H178, and H231. N277 contacts substrate. D304 is a Zn(2+) binding site. The active site involves D304. Residues H308 and 322–323 contribute to the substrate site; that span reads FG.

It belongs to the metallo-dependent hydrolases superfamily. DHOase family. Class I DHOase subfamily. The cofactor is Zn(2+).

The catalysed reaction is (S)-dihydroorotate + H2O = N-carbamoyl-L-aspartate + H(+). It functions in the pathway pyrimidine metabolism; UMP biosynthesis via de novo pathway; (S)-dihydroorotate from bicarbonate: step 3/3. Catalyzes the reversible cyclization of carbamoyl aspartate to dihydroorotate. In Bacillus pumilus (strain SAFR-032), this protein is Dihydroorotase.